Here is a 423-residue protein sequence, read N- to C-terminus: MSSKFMKSTAVLGTVTLASLLLVACGSKTADKPADSGSSEVKELTVYVDEGYKSYIEEVAKAYEKEAGVKVTLKTGDALGGLDKLSLDNQSGNVPDVMMAPYDRVGSLGSDGQLSEVKLSDGAKTDDTTKSLVTAANGKVYGAPAVIESLVMYYNKDLVKDAPKTFADLENLAKDSKYAFAGEDGKTTAFLADWTNFYYTYGLLAGNGAYVFGQNGKDAKDIGLANDGSIAGINYAKSWYEKWPKGMQDTEGAGNLIQTQFQEGKTAAIIDGPWKAQAFKDAKVNYGVATIPTLPNGKEYAAFGGGKAWVIPQAVKNLEASQKFVDFLVATEQQKVLYDKTNEIPANTEARSYAEGKNDELTTAVIKQFKNTQPLPNISQMSAVWDPAKNMLFDAVSGQKDAKTAANDAVTLIKETIKQKFGE.

An N-terminal signal peptide occupies residues 1-24 (MSSKFMKSTAVLGTVTLASLLLVA). The N-palmitoyl cysteine moiety is linked to residue cysteine 25. Cysteine 25 carries the S-diacylglycerol cysteine lipid modification. Substrate contacts are provided by residues tyrosine 52, aspartate 77, aspartate 83, 103 to 104 (DR), glutamate 148, aspartate 193, asparagine 196, 251 to 254 (EGAG), tryptophan 274, and lysine 307.

The protein belongs to the bacterial solute-binding protein 1 family.

The protein localises to the cell membrane. In terms of biological role, part of an ABC transporter complex involved in the uptake of maltodextrins. Binds glycogen-derived linear maltooligosaccharides increasing in size from maltotriose to maltooctaose with the highest affinity for maltotriose. Has a very weak affinity for maltose. Has also a very low affinity for maltotetraitol, indicating that the binding is selective for maltooligosaccharides with an intact reducing end. This chain is Maltooligosaccharide ABC transporter solute-binding lipoprotein (malX), found in Streptococcus pneumoniae (strain ATCC BAA-255 / R6).